A 448-amino-acid polypeptide reads, in one-letter code: Na(+)-malate symporter (448 aa).

11 helical membrane-spanning segments follow: residues 31 to 51 (IGVI…LAAY), 60 to 80 (LGGF…GQRI), 86 to 106 (IGGP…YNVL), 123 to 143 (FLYF…NRIV), 153 to 173 (VPLV…GFIF), 182 to 202 (FFVV…PLSI), 214 to 234 (VFVS…IICA), 276 to 293 (LMGA…FGGL), 297 to 319 (FIFI…ANIL), 333 to 353 (FISS…FIPL), and 359 to 379 (VISI…IGSG).

The protein belongs to the 2-hydroxycarboxylate transporter (2-HCT) (TC 2.A.24) family.

The protein resides in the cell membrane. In terms of biological role, acts as a Na(+)-malate symporter, as it catalyzes malate-dependent uptake of Na(+) and Na(+)-dependent uptake of malate. In Bacillus subtilis (strain 168), this protein is Na(+)-malate symporter.